We begin with the raw amino-acid sequence, 309 residues long: Vomeronasal type-1 receptor 52 (309 aa).

The Extracellular portion of the chain corresponds to 1 to 19 (MNKDHTLYCSVYIRNAFFS). A helical membrane pass occupies residues 20–40 (EIGIGISANSCLLLFHTFMFI). The Cytoplasmic segment spans residues 41–49 (RGHRPRLTD). Residues 50 to 70 (LPIGFVALIHLVMLLLAAYIT) form a helical membrane-spanning segment. The Extracellular portion of the chain corresponds to 71–93 (EDFFMSSGGWDDITCKLVIFLHR). A disulfide bridge links cysteine 85 with cysteine 172. The chain crosses the membrane as a helical span at residues 94-114 (FFRSLSVCATCLLSVFQAIIL). At 115–134 (CPQSSHLAKLKQNSPHQLSY) the chain is on the cytoplasmic side. The chain crosses the membrane as a helical span at residues 135-155 (FFIFLSIFYTSISSHILIAAI). Residues 156 to 187 (PTQNITFVNLIYITNSCSFLPLSSSMQHTFST) lie on the Extracellular side of the membrane. N-linked (GlcNAc...) asparagine glycosylation is present at asparagine 159. Residues 188–208 (LLAFRNVFVIGLMGLSTCYMA) form a helical membrane-spanning segment. The Cytoplasmic portion of the chain corresponds to 209 to 238 (TLLCRHKTRSQRLQNSKLSPKATPEQRALR). The helical transmembrane segment at 239-259 (TILMLMSFFLLMSTFDSIISY) threads the bilayer. The Extracellular segment spans residues 260–268 (SRTILQGNP). Residues 269–289 (LPFCFQILVAHSYAAVSPLLV) traverse the membrane as a helical segment. Over 290 to 309 (LSNEKRITNLLISMYEKIVL) the chain is Cytoplasmic.

The protein belongs to the G-protein coupled receptor 1 family.

It localises to the cell membrane. Functionally, putative pheromone receptor implicated in the regulation of social and reproductive behavior. The chain is Vomeronasal type-1 receptor 52 (Vmn1r52) from Mus musculus (Mouse).